The following is a 167-amino-acid chain: MELWLTGIVLKPRGLKGEVKVKPVTDYPEKFLSRKSYWVGGSPGDAVPLAVKHASLAGGFAWLFLEGVDSREKAEALAGRQLFIEASEAEPRKDDRAWLHELEGMKVLGAGRKEVGVLKEVLSMPAHEVYEIISGGRSVLVPAIEEFVEEISLEGRYIHVPRFDEFL.

The 73-residue stretch at Asp94 to Phe166 folds into the PRC barrel domain.

This sequence belongs to the RimM family. In terms of assembly, binds ribosomal protein uS19.

The protein localises to the cytoplasm. In terms of biological role, an accessory protein needed during the final step in the assembly of 30S ribosomal subunit, possibly for assembly of the head region. Essential for efficient processing of 16S rRNA. May be needed both before and after RbfA during the maturation of 16S rRNA. It has affinity for free ribosomal 30S subunits but not for 70S ribosomes. The sequence is that of Ribosome maturation factor RimM from Chlorobium luteolum (strain DSM 273 / BCRC 81028 / 2530) (Pelodictyon luteolum).